The chain runs to 256 residues: Probable ribosomal RNA small subunit methyltransferase A (256 aa).

Positions 8, 10, 34, 55, 83, and 98 each coordinate S-adenosyl-L-methionine.

The protein belongs to the class I-like SAM-binding methyltransferase superfamily. rRNA adenine N(6)-methyltransferase family. RsmA subfamily.

The protein resides in the cytoplasm. Specifically dimethylates two adjacent adenosines in the loop of a conserved hairpin near the 3'-end of 16S rRNA in the 30S particle. May play a critical role in biogenesis of 30S subunits. The polypeptide is Probable ribosomal RNA small subunit methyltransferase A (Methanospirillum hungatei JF-1 (strain ATCC 27890 / DSM 864 / NBRC 100397 / JF-1)).